The chain runs to 214 residues: Large ribosomal subunit protein uL18 (214 aa).

Belongs to the universal ribosomal protein uL18 family. As to quaternary structure, part of the 50S ribosomal subunit. Contacts the 5S and 23S rRNAs.

Its function is as follows. This is one of the proteins that bind and probably mediate the attachment of the 5S RNA into the large ribosomal subunit, where it forms part of the central protuberance. This chain is Large ribosomal subunit protein uL18, found in Aeropyrum pernix (strain ATCC 700893 / DSM 11879 / JCM 9820 / NBRC 100138 / K1).